The chain runs to 448 residues: tRNA(Ile)-lysidine synthase (448 aa).

25–30 is a binding site for ATP; it reads SGGSDS.

It belongs to the tRNA(Ile)-lysidine synthase family.

It is found in the cytoplasm. It carries out the reaction cytidine(34) in tRNA(Ile2) + L-lysine + ATP = lysidine(34) in tRNA(Ile2) + AMP + diphosphate + H(+). Its function is as follows. Ligates lysine onto the cytidine present at position 34 of the AUA codon-specific tRNA(Ile) that contains the anticodon CAU, in an ATP-dependent manner. Cytidine is converted to lysidine, thus changing the amino acid specificity of the tRNA from methionine to isoleucine. The protein is tRNA(Ile)-lysidine synthase of Brucella abortus (strain S19).